Reading from the N-terminus, the 100-residue chain is Aspartyl/glutamyl-tRNA(Asn/Gln) amidotransferase subunit C (100 aa).

It belongs to the GatC family. In terms of assembly, heterotrimer of A, B and C subunits.

It catalyses the reaction L-glutamyl-tRNA(Gln) + L-glutamine + ATP + H2O = L-glutaminyl-tRNA(Gln) + L-glutamate + ADP + phosphate + H(+). The enzyme catalyses L-aspartyl-tRNA(Asn) + L-glutamine + ATP + H2O = L-asparaginyl-tRNA(Asn) + L-glutamate + ADP + phosphate + 2 H(+). Its function is as follows. Allows the formation of correctly charged Asn-tRNA(Asn) or Gln-tRNA(Gln) through the transamidation of misacylated Asp-tRNA(Asn) or Glu-tRNA(Gln) in organisms which lack either or both of asparaginyl-tRNA or glutaminyl-tRNA synthetases. The reaction takes place in the presence of glutamine and ATP through an activated phospho-Asp-tRNA(Asn) or phospho-Glu-tRNA(Gln). The chain is Aspartyl/glutamyl-tRNA(Asn/Gln) amidotransferase subunit C from Streptococcus sanguinis (strain SK36).